We begin with the raw amino-acid sequence, 260 residues long: Arginine esterase (260 aa).

An N-terminal signal peptide occupies residues 1–17; it reads MWFLALCLAMSLGWTGA. Residues 18–24 constitute a propeptide, activation peptide; sequence EPHFQPR. A Peptidase S1 domain is found at 25-257; it reads IIGGRECLKN…HLMWIKDTMK (233 aa). Intrachain disulfides connect Cys31–Cys172, Cys50–Cys66, Cys151–Cys218, Cys183–Cys197, and Cys208–Cys233. Catalysis depends on His65, which acts as the Charge relay system. N-linked (GlcNAc...) asparagine glycosylation occurs at Asn79. Asp119 acts as the Charge relay system in catalysis. Ser212 functions as the Charge relay system in the catalytic mechanism.

It belongs to the peptidase S1 family. Kallikrein subfamily.

The catalysed reaction is Preferential cleavage of Arg-|-Xaa bonds in small molecule substrates. Highly selective action to release kallidin (lysyl-bradykinin) from kininogen involves hydrolysis of Met-|-Xaa or Leu-|-Xaa.. This serine protease is found in dog seminal plasma, its exact physiological function is not known. The polypeptide is Arginine esterase (Canis lupus familiaris (Dog)).